The chain runs to 102 residues: Small ribosomal subunit protein uS14 (102 aa).

This sequence belongs to the universal ribosomal protein uS14 family. In terms of assembly, part of the 30S ribosomal subunit. Contacts proteins S3 and S10.

Functionally, binds 16S rRNA, required for the assembly of 30S particles and may also be responsible for determining the conformation of the 16S rRNA at the A site. This is Small ribosomal subunit protein uS14 from Ehrlichia ruminantium (strain Gardel).